The sequence spans 201 residues: FMN-dependent NADH:quinone oxidoreductase (201 aa).

Residues S10, 16-18 (SQS), 96-99 (MYNF), and 140-143 (SRGG) contribute to the FMN site.

It belongs to the azoreductase type 1 family. In terms of assembly, homodimer. It depends on FMN as a cofactor.

It catalyses the reaction 2 a quinone + NADH + H(+) = 2 a 1,4-benzosemiquinone + NAD(+). The enzyme catalyses N,N-dimethyl-1,4-phenylenediamine + anthranilate + 2 NAD(+) = 2-(4-dimethylaminophenyl)diazenylbenzoate + 2 NADH + 2 H(+). Functionally, quinone reductase that provides resistance to thiol-specific stress caused by electrophilic quinones. Also exhibits azoreductase activity. Catalyzes the reductive cleavage of the azo bond in aromatic azo compounds to the corresponding amines. This chain is FMN-dependent NADH:quinone oxidoreductase, found in Salmonella arizonae (strain ATCC BAA-731 / CDC346-86 / RSK2980).